The sequence spans 431 residues: Transmembrane protease serine 11C (431 aa).

Over 1–33 (MARGQPRRSEEQWTALQNRTECKTKIKLTRCGK) the chain is Cytoplasmic. Residues 34–54 (ITLGILTAVLAAVLIGLIAYF) traverse the membrane as a helical; Signal-anchor for type II membrane protein segment. Residues 55–431 (AACGKDSFYY…RDWITSKTGL (377 aa)) lie on the Extracellular side of the membrane. The SEA domain occupies 60 to 177 (DSFYYHVSFK…SSFKFSDIAM (118 aa)). N99 is a glycosylation site (N-linked (GlcNAc...) asparagine). The 231-residue stretch at 200 to 430 (VAGGQDAEEG…YRDWITSKTG (231 aa)) folds into the Peptidase S1 domain. Cysteines 225 and 241 form a disulfide. Residue H240 is the Charge relay system of the active site. A glycan (N-linked (GlcNAc...) asparagine) is linked at N276. Residue D285 is the Charge relay system of the active site. Residue N347 is glycosylated (N-linked (GlcNAc...) asparagine). Intrachain disulfides connect C350–C366 and C377–C406. The active-site Charge relay system is the S381.

Belongs to the peptidase S1 family. Post-translationally, proteolytically cleaved via an autocatalytic mechanism. As to expression, expressed specifically in Purkinje neurons of the cerebellum (at protein level). Also detected in spinal cord.

Its subcellular location is the cell membrane. The protein resides in the cell projection. It localises to the dendrite. The protein localises to the perikaryon. Its function is as follows. Serine protease which has a preference for Arg or Lys in position P1 and uncharged residues in positions P2 and P3. Shows specificity towards FGF2 in vitro. This chain is Transmembrane protease serine 11C, found in Mus musculus (Mouse).